Reading from the N-terminus, the 212-residue chain is uncharacterized protein (212 aa).

2 helical membrane passes run 54–74 (LCFA…GYAG) and 79–99 (WIIC…ALLL).

It is found in the cell membrane. This is an uncharacterized protein from Chlamydia pneumoniae (Chlamydophila pneumoniae).